The following is a 284-amino-acid chain: NAD kinase (284 aa).

Aspartate 60 functions as the Proton acceptor in the catalytic mechanism. Residues 60–61 (DG), 134–135 (NE), arginine 145, lysine 162, aspartate 164, 175–180 (TAYSFS), and glutamine 234 contribute to the NAD(+) site.

The protein belongs to the NAD kinase family. It depends on a divalent metal cation as a cofactor.

The protein resides in the cytoplasm. It catalyses the reaction NAD(+) + ATP = ADP + NADP(+) + H(+). Functionally, involved in the regulation of the intracellular balance of NAD and NADP, and is a key enzyme in the biosynthesis of NADP. Catalyzes specifically the phosphorylation on 2'-hydroxyl of the adenosine moiety of NAD to yield NADP. The protein is NAD kinase of Clostridium botulinum (strain Alaska E43 / Type E3).